The sequence spans 374 residues: Ribonuclease D (374 aa).

One can recognise a 3'-5' exonuclease domain in the interval 6-171 (IISTTEDLKK…RATRVILLSK (166 aa)). The HRDC domain occupies 213 to 292 (DRKSIGVAQE…ARALNKKEVD (80 aa)).

It belongs to the RNase D family. Requires a divalent metal cation as cofactor.

The protein resides in the cytoplasm. It carries out the reaction Exonucleolytic cleavage that removes extra residues from the 3'-terminus of tRNA to produce 5'-mononucleotides.. In terms of biological role, exonuclease involved in the 3' processing of various precursor tRNAs. Initiates hydrolysis at the 3'-terminus of an RNA molecule and releases 5'-mononucleotides. The polypeptide is Ribonuclease D (Desulfotalea psychrophila (strain LSv54 / DSM 12343)).